Reading from the N-terminus, the 479-residue chain is MNYLNENIDSLNKKLASGELSADKLAKDTVANIKETDKKLNAWITVLDDAKPAENLDYSKSKLAGIPIAIKDNIITNGVKTTAASHMLYNYMPMYDATVISKLKKAGATFVGKTNMDEFAMGSSTEHSYYGATHNPWNLDKVPGGSSGGSAAAVAGGQVVAALGSDTGGSIRQPAAFNGIFGIKPTYGRVSRWGLIAFGSSLDQIGVMTKRVKDSAEVLNVIAGGDEHDSTVSVREVPDFTKFIGQDVKGLRVAVPKEYMDAVSGEMREVIQKQIDTLKDAGAIINEVSLPHTKYAVPDYYIIASSEASSNLQRYDGIRYGYRAKDTKNLLDVYVKSRSEGFGTEIKRRIMLGSFALSAGSYDRFFRQAAKVRTLICDDFDKIFAENDVIVGPTTTEPAFGIGEEVSDPIKMYNNDILTISANLAGIPAASVPAGLVDGMPVGLQIMAKRFDEGSIFKTADFIERTNKFYEKTPTGMED.

Catalysis depends on charge relay system residues Lys71 and Ser146. Catalysis depends on Ser170, which acts as the Acyl-ester intermediate.

It belongs to the amidase family. GatA subfamily. In terms of assembly, heterotrimer of A, B and C subunits.

It carries out the reaction L-glutamyl-tRNA(Gln) + L-glutamine + ATP + H2O = L-glutaminyl-tRNA(Gln) + L-glutamate + ADP + phosphate + H(+). Allows the formation of correctly charged Gln-tRNA(Gln) through the transamidation of misacylated Glu-tRNA(Gln) in organisms which lack glutaminyl-tRNA synthetase. The reaction takes place in the presence of glutamine and ATP through an activated gamma-phospho-Glu-tRNA(Gln). This is Glutamyl-tRNA(Gln) amidotransferase subunit A from Lactobacillus acidophilus (strain ATCC 700396 / NCK56 / N2 / NCFM).